The chain runs to 355 residues: UDP-N-acetylglucosamine--N-acetylmuramyl-(pentapeptide) pyrophosphoryl-undecaprenol N-acetylglucosamine transferase (355 aa).

UDP-N-acetyl-alpha-D-glucosamine contacts are provided by residues Thr-13–Gly-15, Asn-125, Arg-162, Ser-190, Ile-244, and Gln-289.

Belongs to the glycosyltransferase 28 family. MurG subfamily.

The protein resides in the cell inner membrane. It carries out the reaction di-trans,octa-cis-undecaprenyl diphospho-N-acetyl-alpha-D-muramoyl-L-alanyl-D-glutamyl-meso-2,6-diaminopimeloyl-D-alanyl-D-alanine + UDP-N-acetyl-alpha-D-glucosamine = di-trans,octa-cis-undecaprenyl diphospho-[N-acetyl-alpha-D-glucosaminyl-(1-&gt;4)]-N-acetyl-alpha-D-muramoyl-L-alanyl-D-glutamyl-meso-2,6-diaminopimeloyl-D-alanyl-D-alanine + UDP + H(+). Its pathway is cell wall biogenesis; peptidoglycan biosynthesis. Functionally, cell wall formation. Catalyzes the transfer of a GlcNAc subunit on undecaprenyl-pyrophosphoryl-MurNAc-pentapeptide (lipid intermediate I) to form undecaprenyl-pyrophosphoryl-MurNAc-(pentapeptide)GlcNAc (lipid intermediate II). This chain is UDP-N-acetylglucosamine--N-acetylmuramyl-(pentapeptide) pyrophosphoryl-undecaprenol N-acetylglucosamine transferase, found in Neisseria gonorrhoeae (strain ATCC 700825 / FA 1090).